A 329-amino-acid polypeptide reads, in one-letter code: GTP 3',8-cyclase (329 aa).

The Radical SAM core domain occupies 8–234 (AFARKFYYLR…QLRQRSDGPA (227 aa)). R17 is a binding site for GTP. Positions 24 and 28 each coordinate [4Fe-4S] cluster. Y30 contributes to the S-adenosyl-L-methionine binding site. C31 provides a ligand contact to [4Fe-4S] cluster. A GTP-binding site is contributed by R68. An S-adenosyl-L-methionine-binding site is contributed by G72. T99 contacts GTP. S123 lines the S-adenosyl-L-methionine pocket. K160 provides a ligand contact to GTP. M194 is a binding site for S-adenosyl-L-methionine. The [4Fe-4S] cluster site is built by C257 and C260. 262-264 (RLR) serves as a coordination point for GTP. C274 provides a ligand contact to [4Fe-4S] cluster.

This sequence belongs to the radical SAM superfamily. MoaA family. Monomer and homodimer. Requires [4Fe-4S] cluster as cofactor.

The enzyme catalyses GTP + AH2 + S-adenosyl-L-methionine = (8S)-3',8-cyclo-7,8-dihydroguanosine 5'-triphosphate + 5'-deoxyadenosine + L-methionine + A + H(+). Its pathway is cofactor biosynthesis; molybdopterin biosynthesis. Functionally, catalyzes the cyclization of GTP to (8S)-3',8-cyclo-7,8-dihydroguanosine 5'-triphosphate. This Escherichia coli O127:H6 (strain E2348/69 / EPEC) protein is GTP 3',8-cyclase.